A 356-amino-acid chain; its full sequence is 5-formaminoimidazole-4-carboxamide-1-(beta)-D-ribofuranosyl 5'-monophosphate synthetase 1 (356 aa).

The 5-amino-1-(5-phospho-beta-D-ribosyl)imidazole-4-carboxamide site is built by histidine 27 and serine 94. The 233-residue stretch at threonine 101 to serine 333 folds into the ATP-grasp domain. Residues proline 145–tyrosine 196 and glutamate 226 contribute to the ATP site. Asparagine 255 is a 5-amino-1-(5-phospho-beta-D-ribosyl)imidazole-4-carboxamide binding site. The Mg(2+) site is built by glutamate 293 and glutamate 306.

It belongs to the phosphohexose mutase family. It depends on Mg(2+) as a cofactor. Requires Mn(2+) as cofactor.

It catalyses the reaction 5-amino-1-(5-phospho-beta-D-ribosyl)imidazole-4-carboxamide + formate + ATP = 5-formamido-1-(5-phospho-D-ribosyl)imidazole-4-carboxamide + ADP + phosphate. It participates in purine metabolism; IMP biosynthesis via de novo pathway; 5-formamido-1-(5-phospho-D-ribosyl)imidazole-4-carboxamide from 5-amino-1-(5-phospho-D-ribosyl)imidazole-4-carboxamide (formate route): step 1/1. Catalyzes the ATP- and formate-dependent formylation of 5-aminoimidazole-4-carboxamide-1-beta-d-ribofuranosyl 5'-monophosphate (AICAR) to 5-formaminoimidazole-4-carboxamide-1-beta-d-ribofuranosyl 5'-monophosphate (FAICAR) in the absence of folates. This Methanosarcina mazei (strain ATCC BAA-159 / DSM 3647 / Goe1 / Go1 / JCM 11833 / OCM 88) (Methanosarcina frisia) protein is 5-formaminoimidazole-4-carboxamide-1-(beta)-D-ribofuranosyl 5'-monophosphate synthetase 1.